A 611-amino-acid polypeptide reads, in one-letter code: MSETLERHAFGAEVGRLLDLVVHALYSEREIFLRELVANAADAVDRRRFGALTDPALALPAEAKVRIRPDKAARTLTISDPGIGMGKEDLAQNLGTIARSGTRAFSQSLAEAKPDERPSLIGQFGVGFYSAFMVADRVEVTSRRAGSDEAWTWASDGEGEYTLSPATREEPGTDVVLHMKADADEYLEPLRIETIVRKWADHITVPITLLRDGEEVSGNEGTALWRKPKAEITEETYTAFYRHLTHNFDTPWATLHWRAEGALDFSALLFIPSMKPFLAVEEERESKVRLHVRRMFITDEAGLLPSWLRFVQGVVDTEDLPLNVSREMLQATPVLARIRRAVTAKVLSELKSRAKDADGYASFWQAFGPVLKEGIWEDAEQRDDIAGLIRFRSSAVEGWTSFADYVSRMKPNQEAIYILVGDDTKALASSAQIEGFRARGIEVLLLSDHVDAFWPERLDKFDGKPIRSITQSADDLSAFAPEGESEGEAADLADLVPKLKEILKDDVTDVRASQRLVESAVLLSASSGGPDLQMQRLLRRAGRGFGAGLPVLELNPRHALVRRLAERAKTGEDIAEAAQTLLDLAHVQGGDAPRDPVAFARRVATALAAQG.

The a; substrate-binding stretch occupies residues 1–326; sequence MSETLERHAF…TEDLPLNVSR (326 aa). The b stretch occupies residues 327–536; sequence EMLQATPVLA…SGGPDLQMQR (210 aa). The tract at residues 537-611 is c; the sequence is LLRRAGRGFG…RVATALAAQG (75 aa).

The protein belongs to the heat shock protein 90 family. As to quaternary structure, homodimer.

The protein localises to the cytoplasm. Molecular chaperone. Has ATPase activity. This chain is Chaperone protein HtpG, found in Methylobacterium nodulans (strain LMG 21967 / CNCM I-2342 / ORS 2060).